A 218-amino-acid polypeptide reads, in one-letter code: Small ribosomal subunit protein uS3c (218 aa).

Residues 47 to 118 (IRRHMRSSSN…KLNIAIVKVA (72 aa)) form the KH type-2 domain.

It belongs to the universal ribosomal protein uS3 family. In terms of assembly, part of the 30S ribosomal subunit.

It localises to the plastid. Its subcellular location is the chloroplast. The polypeptide is Small ribosomal subunit protein uS3c (rps3) (Cycas taitungensis (Prince sago)).